The following is a 370-amino-acid chain: Aminomethyltransferase (370 aa).

It belongs to the GcvT family. As to quaternary structure, the glycine cleavage system is composed of four proteins: P, T, L and H.

The enzyme catalyses N(6)-[(R)-S(8)-aminomethyldihydrolipoyl]-L-lysyl-[protein] + (6S)-5,6,7,8-tetrahydrofolate = N(6)-[(R)-dihydrolipoyl]-L-lysyl-[protein] + (6R)-5,10-methylene-5,6,7,8-tetrahydrofolate + NH4(+). Functionally, the glycine cleavage system catalyzes the degradation of glycine. This chain is Aminomethyltransferase, found in Prochlorococcus marinus (strain MIT 9301).